The chain runs to 519 residues: Transcription factor IIIB 50 kDa subunit (519 aa).

The TFIIB-type zinc-finger motif lies at 3–36 (GAKQCPDCGSSDIVEDAHYSQDQVVCADCGCILS). 4 residues coordinate Zn(2+): Cys7, Cys10, Cys28, and Cys31. Copy 2 of the repeat occupies 173 to 249 (VMSHCRSFKL…ARRLSCSLSR (77 aa)). Cys462 bears the Cysteine sulfenic acid (-SOH) mark. Residues 465–487 (NPRKRSRSIPFPRGHLDITGDED) form a disordered region.

The protein belongs to the TFIIB family. Component of TFIIIB complexes. Interacts with TBP and forms a ternary complex with TBp and target DNA sequences. In terms of processing, in response to oxidative stress, a Cys-residue is reversibly oxidized to cysteine sulfenic acid. This impairs formation of a ternary complex with TBP and DNA and down-regulates expression of target genes in response to oxidative stress.

It is found in the nucleus. Its function is as follows. General activator of RNA polymerase III transcription. Factor exclusively required for RNA polymerase III transcription of genes with promoter elements upstream of the initiation sites. Contributes to the regulation of gene expression; functions as activator in the absence of oxidative stress. Down-regulates expression of target genes in response to oxidative stress. Overexpression protects cells against apoptosis in response to oxidative stress. The sequence is that of Transcription factor IIIB 50 kDa subunit (brf2) from Xenopus tropicalis (Western clawed frog).